The primary structure comprises 510 residues: Bifunctional purine biosynthesis protein PurH (510 aa).

Residues 1–142 (MRALLSVSDK…KNFKDVLIVT (142 aa)) form the MGS-like domain.

The protein belongs to the PurH family.

It carries out the reaction (6R)-10-formyltetrahydrofolate + 5-amino-1-(5-phospho-beta-D-ribosyl)imidazole-4-carboxamide = 5-formamido-1-(5-phospho-D-ribosyl)imidazole-4-carboxamide + (6S)-5,6,7,8-tetrahydrofolate. It catalyses the reaction IMP + H2O = 5-formamido-1-(5-phospho-D-ribosyl)imidazole-4-carboxamide. It participates in purine metabolism; IMP biosynthesis via de novo pathway; 5-formamido-1-(5-phospho-D-ribosyl)imidazole-4-carboxamide from 5-amino-1-(5-phospho-D-ribosyl)imidazole-4-carboxamide (10-formyl THF route): step 1/1. Its pathway is purine metabolism; IMP biosynthesis via de novo pathway; IMP from 5-formamido-1-(5-phospho-D-ribosyl)imidazole-4-carboxamide: step 1/1. This Campylobacter concisus (strain 13826) protein is Bifunctional purine biosynthesis protein PurH.